The sequence spans 1239 residues: DNA topoisomerase 2 (1239 aa).

Residues asparagine 65, asparagine 96, 124–126 (SSN), 137–144 (GRHGYGAK), and 354–356 (QSK) contribute to the ATP site. The Toprim domain occupies 434–548 (RTLIVTEGDS…SLLQHNPGYI (115 aa)). Glutamate 440, aspartate 517, and aspartate 519 together coordinate Mg(2+). Positions 685–1101 (IPHCVDGLKP…TPVKMWLTDL (417 aa)) constitute a Topo IIA-type catalytic domain. Tyrosine 775 functions as the O-(5'-phospho-DNA)-tyrosine intermediate in the catalytic mechanism. Positions 956–965 (ALSQRIYING) are interaction with DNA. The segment at 1167–1206 (PASKRKPEDTYGGALSSGGSTRNVGKRLTGARGAKKKKVV) is disordered.

Belongs to the type II topoisomerase family. As to quaternary structure, homodimer. Mg(2+) is required as a cofactor. Requires Mn(2+) as cofactor. It depends on Ca(2+) as a cofactor.

Its subcellular location is the nucleus. The protein resides in the mitochondrion matrix. It is found in the kinetoplast. It catalyses the reaction ATP-dependent breakage, passage and rejoining of double-stranded DNA.. In terms of biological role, control of topological states of DNA by transient breakage and subsequent rejoining of DNA strands. Topoisomerase II makes double-strand breaks. This is DNA topoisomerase 2 (TOP2) from Crithidia fasciculata.